Here is a 238-residue protein sequence, read N- to C-terminus: Succinate dehydrogenase assembly factor 2, mitochondrial (238 aa).

The tract at residues 47–82 (GLKADGSRADQAEAGASQSLDKQSRTLDSVRDDTLS) is disordered. Over residues 68–80 (KQSRTLDSVRDDT) the composition is skewed to basic and acidic residues.

The protein belongs to the SDHAF2 family. As to quaternary structure, interacts with the flavoprotein subunit within the SDH catalytic dimer.

The protein localises to the mitochondrion matrix. Plays an essential role in the assembly of succinate dehydrogenase (SDH), an enzyme complex (also referred to as respiratory complex II) that is a component of both the tricarboxylic acid (TCA) cycle and the mitochondrial electron transport chain, and which couples the oxidation of succinate to fumarate with the reduction of ubiquinone (coenzyme Q) to ubiquinol. Required for flavinylation (covalent attachment of FAD) of the flavoprotein subunit of the SDH catalytic dimer. The sequence is that of Succinate dehydrogenase assembly factor 2, mitochondrial from Mycosarcoma maydis (Corn smut fungus).